The chain runs to 281 residues: Bifunctional N-acyl-homoserine lactone acylase/prephenate dehydratase (281 aa).

The Prephenate dehydratase domain occupies 6–181 (IIAFQGRPGA…NTTRFYIASR (176 aa)). The ACT domain maps to 196–273 (TLLFRVNNQP…EQQEILGVYP (78 aa)). Residues alanine 207, leucine 208, asparagine 221, and methionine 222 each contribute to the L-phenylalanine site.

Homodimer.

The enzyme catalyses an N-acyl-L-homoserine lactone + H2O = L-homoserine lactone + a carboxylate. It carries out the reaction prephenate + H(+) = 3-phenylpyruvate + CO2 + H2O. It functions in the pathway amino-acid biosynthesis; L-phenylalanine biosynthesis; phenylpyruvate from prephenate: step 1/1. Multifunctional enzyme that acts on N-acyl-homoserine lactones (AHLs), beta-lactam antibiotics and shows prephenate dehydratase activity. Acts as an acylase on AHL and hydrolyzes the amide bond of the acyl side-chain of AHL molecules, releasing homoserine lactone (HSL) and the fatty acid. Can use different 3-oxo-acyl homoserine lactones, such as 3-oxo-decanoyl homoserine lactone, which is the preferred substrate, 3-oxo-octanoyl homoserine lactone, 3-oxo-hexanoyl homoserine lactone and 3-oxo-dodecanoyl homoserine lactone. It can also degrade various beta-lactam antibiotics, including penicillin G, amoxicillin and ampicillin, but not cefotaxime. In addition, it can complement a phenylalanine auxotrophic E.coli mutant, which carries a kanamycin gene inserted into pheA, suggesting that GqqA can also function as a prephenate dehydratase. Involved in bacterial quorum quenching (QQ) and cellulose biofilm formation. The chain is Bifunctional N-acyl-homoserine lactone acylase/prephenate dehydratase from Komagataeibacter europaeus (Gluconacetobacter europaeus).